Here is an 840-residue protein sequence, read N- to C-terminus: DNA mismatch repair protein MutS (840 aa).

601 to 608 (GPNMSGKS) is an ATP binding site.

The protein belongs to the DNA mismatch repair MutS family.

Its function is as follows. This protein is involved in the repair of mismatches in DNA. It is possible that it carries out the mismatch recognition step. This protein has a weak ATPase activity. The chain is DNA mismatch repair protein MutS from Lactococcus lactis subsp. cremoris (strain MG1363).